Consider the following 321-residue polypeptide: Olfactory receptor 5P60 (321 aa).

Residues M1 to I28 lie on the Extracellular side of the membrane. N-linked (GlcNAc...) asparagine glycosylation is present at N8. Residues V29–I49 traverse the membrane as a helical segment. Over L50–Q57 the chain is Cytoplasmic. A helical membrane pass occupies residues L58–S78. At S79–I102 the chain is on the extracellular side. A disulfide bridge connects residues C100 and C192. Residues Q103–Y123 form a helical membrane-spanning segment. Over D124 to S136 the chain is Cytoplasmic. The helical transmembrane segment at T137–L157 threads the bilayer. Residues N158–V199 are Extracellular-facing. A helical membrane pass occupies residues L200 to S220. Residues Y221–A240 are Cytoplasmic-facing. The helical transmembrane segment at F241–I261 threads the bilayer. Topologically, residues Y262–N274 are extracellular. Residues K275–L295 form a helical membrane-spanning segment. Over R296 to Y321 the chain is Cytoplasmic.

This sequence belongs to the G-protein coupled receptor 1 family.

The protein localises to the cell membrane. In terms of biological role, potential odorant receptor. This chain is Olfactory receptor 5P60, found in Mus musculus (Mouse).